The sequence spans 192 residues: Neurogenic differentiation factor 1 (192 aa).

Residues 19–71 (VRRVKANGRERARMHGLNNALDMLREYIPITTQHQKLSKIETLRLARNYIDAL) form the bHLH domain. The disordered stretch occupies residues 116–192 (PSQFDIFSDP…SHQNTFNYSP (77 aa)). The segment covering 139–163 (SSFSSSSPSSSCSPPQYYYSPTQPS) has biased composition (low complexity).

As to expression, expressed in neuroblasts of the AB lineage. More specifically in precursors of the embryonic ventral cord motor neurons. Expressed to a lesser degree in the EMS lineage which generates mostly endoderm and mesoderm tissues.

The protein resides in the nucleus. Functionally, acts as a transcriptional regulator whose activity is required for several aspects of motor neuron fate specification, including cell division patterns, proper spatiotemporal expression of fate-specific markers, and normal axonal morphology and pathfinding. Involved in regulating glial specification. This Caenorhabditis elegans protein is Neurogenic differentiation factor 1 (cnd-1).